The chain runs to 422 residues: MGSRETPSSCSKTHETLNLETPESSSTDPDSPLEEQWPKSAPDLKEEDSMDMVLEDSKEPLTPSSPPTGREVIRYEVNVNQRNIEDICLCCGSLQVYAQHPLFEGGICAPCKDKFLETLFLYDEDGHQSYCTICCSGHTLFICESPDCTRCYCFECVDILVGPGTSERINAMACWVCFLCLPFSRSGLLQRRKKWRHQLKAFHDREGASPVEIYKTVSAWKRQPVRVLSLFGNIDKELKSLGFLESSSGSEGGTLKYVEDVTNVVRREVEKWGPFDLVYGSTQPLGYSCDRCPGWYMFQFHRILQYARPRQDSQQPFFWIFVDNLLLTEDDQETTVRFLQTEAVTLQDVRGRVLQNAMRVWSNIPGLKSKHADLTPKEEQSLQTQVRTRSKLAAQKVDSLVKYCLLPLREYFKYFSQNSLPL.

Residues 1–11 (MGSRETPSSCS) are compositionally biased toward polar residues. Residues 1–50 (MGSRETPSSCSKTHETLNLETPESSSTDPDSPLEEQWPKSAPDLKEEDSM) form a disordered region. Residues 20-30 (ETPESSSTDPD) are compositionally biased toward low complexity. Residues 76–208 (EVNVNQRNIE…LKAFHDREGA (133 aa)) form the ADD domain. The segment at 87-117 (ICLCCGSLQVYAQHPLFEGGICAPCKDKFLE) adopts a GATA-type; atypical zinc-finger fold. The PHD-type; atypical zinc-finger motif lies at 128–184 (QSYCTICCSGHTLFICESPDCTRCYCFECVDILVGPGTSERINAMACWVCFLCLPFS).

As to quaternary structure, homodimer. Heterotetramer composed of 1 DNMT3A homodimer and 2 DNMT3L subunits (DNMT3L-DNMT3A-DNMT3A-DNMT3L). Interacts with histone H3 (via N-terminus); interaction is strongly inhibited by methylation at lysine 4 (H3K4me). Interacts with EZH2; the interaction is direct. Interacts with SPOCD1.

It is found in the nucleus. Its function is as follows. Catalytically inactive regulatory factor of DNA methyltransferases that can either promote or inhibit DNA methylation depending on the context. Essential for the function of DNMT3A and DNMT3B: activates DNMT3A and DNMT3B by binding to their catalytic domain. Acts by accelerating the binding of DNA and S-adenosyl-L-methionine (AdoMet) to the methyltransferases and dissociates from the complex after DNA binding to the methyltransferases. Recognizes unmethylated histone H3 lysine 4 (H3K4me0) and induces de novo DNA methylation by recruitment or activation of DNMT3. Plays a key role in embryonic stem cells and germ cells. In germ cells, required for the methylation of imprinted loci together with DNMT3A. In male germ cells, specifically required to methylate retrotransposons, preventing their mobilization. Plays a key role in embryonic stem cells (ESCs) by acting both as an positive and negative regulator of DNA methylation. While it promotes DNA methylation of housekeeping genes together with DNMT3A and DNMT3B, it also acts as an inhibitor of DNA methylation at the promoter of bivalent genes. Interacts with the EZH2 component of the PRC2/EED-EZH2 complex, preventing interaction of DNMT3A and DNMT3B with the PRC2/EED-EZH2 complex, leading to maintain low methylation levels at the promoters of bivalent genes. Promotes differentiation of ESCs into primordial germ cells by inhibiting DNA methylation at the promoter of RHOX5, thereby activating its expression. The protein is DNA (cytosine-5)-methyltransferase 3-like (Dnmt3l) of Rattus norvegicus (Rat).